The following is a 185-amino-acid chain: MSGSFELSVQDLNDLLSDGSGCYSLPSQPCNEVTPRIYVGNASVAQDIPKLQKLGITHVLNAAEGRSFMHVNTNANFYKDSGITYLGIKANDTQEFNLSAYFERAADFIDQALAQKNGRVLVHCREGYSRSPTLVIAYLMMRQKMDVKSALSIVRQNREIGPNDGFLAQLCQLNDRLAKEGKLKP.

The Tyrosine-protein phosphatase domain maps to 28 to 179; the sequence is QPCNEVTPRI…LCQLNDRLAK (152 aa). Cys124 functions as the Phosphocysteine intermediate in the catalytic mechanism.

It belongs to the protein-tyrosine phosphatase family. Non-receptor class dual specificity subfamily. In terms of assembly, microtubule inner protein component of sperm flagellar doublet microtubules. Interacts with VRK3; this interaction activates DUSP3 phosphatase activity.

Its subcellular location is the nucleus. The protein localises to the cytoplasm. It is found in the cytoskeleton. It localises to the flagellum axoneme. The catalysed reaction is O-phospho-L-tyrosyl-[protein] + H2O = L-tyrosyl-[protein] + phosphate. It carries out the reaction O-phospho-L-seryl-[protein] + H2O = L-seryl-[protein] + phosphate. It catalyses the reaction O-phospho-L-threonyl-[protein] + H2O = L-threonyl-[protein] + phosphate. Its function is as follows. Shows activity both for tyrosine-protein phosphate and serine-protein phosphate, but displays a strong preference toward phosphotyrosines. Specifically dephosphorylates and inactivates ERK1 and ERK2. The chain is Dual specificity protein phosphatase 3 (DUSP3) from Homo sapiens (Human).